The sequence spans 238 residues: Large ribosomal subunit protein uL2 (238 aa).

Positions 199-238 (PHGGGLHQSVSRSSTVARNTPPGRKVGHIAARRTGRRDRK) are disordered. Residues 206–216 (QSVSRSSTVAR) show a composition bias toward polar residues. Residues 223–238 (KVGHIAARRTGRRDRK) are compositionally biased toward basic residues.

Belongs to the universal ribosomal protein uL2 family. Part of the 50S ribosomal subunit. Forms a bridge to the 30S subunit in the 70S ribosome.

Its function is as follows. One of the primary rRNA binding proteins. Required for association of the 30S and 50S subunits to form the 70S ribosome, for tRNA binding and peptide bond formation. It has been suggested to have peptidyltransferase activity; this is somewhat controversial. Makes several contacts with the 16S rRNA in the 70S ribosome. This is Large ribosomal subunit protein uL2 from Metallosphaera sedula (strain ATCC 51363 / DSM 5348 / JCM 9185 / NBRC 15509 / TH2).